Reading from the N-terminus, the 307-residue chain is D-alanine--D-alanine ligase (307 aa).

In terms of domain architecture, ATP-grasp spans 101-301 (RDVLAAAGVP…FGELVRWMVD (201 aa)). 128 to 182 (LPPPYVIKPLGEGSSFGVFIVREDQAYPPQELTRSDWAFGNRVLVESYIGGRELT) is an ATP binding site. 3 residues coordinate Mg(2+): Asp251, Glu268, and Asn270.

It belongs to the D-alanine--D-alanine ligase family. Requires Mg(2+) as cofactor. Mn(2+) serves as cofactor.

It localises to the cytoplasm. It catalyses the reaction 2 D-alanine + ATP = D-alanyl-D-alanine + ADP + phosphate + H(+). It participates in cell wall biogenesis; peptidoglycan biosynthesis. Its function is as follows. Cell wall formation. In Beijerinckia indica subsp. indica (strain ATCC 9039 / DSM 1715 / NCIMB 8712), this protein is D-alanine--D-alanine ligase.